The following is a 151-amino-acid chain: Transcriptional repressor NrdR (151 aa).

Residues 3–34 (CPFCSSDNTRVIDSRPADDNSSIRRRRLCDDC) fold into a zinc finger. An ATP-cone domain is found at 49 to 139 (LIVIKKDNNR…VYREFKDVNT (91 aa)).

It belongs to the NrdR family. Requires Zn(2+) as cofactor.

In terms of biological role, negatively regulates transcription of bacterial ribonucleotide reductase nrd genes and operons by binding to NrdR-boxes. The sequence is that of Transcriptional repressor NrdR from Agathobacter rectalis (strain ATCC 33656 / DSM 3377 / JCM 17463 / KCTC 5835 / VPI 0990) (Eubacterium rectale).